Reading from the N-terminus, the 247-residue chain is MADS-box transcription factor 1 (247 aa).

One can recognise an MADS-box domain in the interval 1–61 (MGRGRVELKR…GKLYEFCSTS (61 aa)). Residues 91 to 181 (ELSSQQEYLK…RQRMEGYQIN (91 aa)) form the K-box domain.

In terms of tissue distribution, expressed abundantly in the seed coat and to lesser extent in young buds, carpels, petals, and stamen.

The protein resides in the nucleus. Probable transcription factor. The chain is MADS-box transcription factor 1 from Pisum sativum (Garden pea).